The following is a 466-amino-acid chain: 55 kDa erythrocyte membrane protein (466 aa).

At T2 the chain carries N-acetylthreonine. A phosphoserine mark is found at S13 and S19. T49 is modified (phosphothreonine). S52, S57, and S110 each carry phosphoserine. The region spanning 71–152 (LIQFEKVTEE…MISLKVIPNQ (82 aa)) is the PDZ domain. The SH3 domain occupies 158-228 (ALQMFMRAQF…PSPELQEWRV (71 aa)). S243 is modified (phosphoserine). An interaction with PALS1 region spans residues 268-466 (VVSYEEVVRL…PQWVPVSWVY (199 aa)). Positions 282–451 (RKTLVLIGAS…TLKKLQEAFD (170 aa)) constitute a Guanylate kinase-like domain.

This sequence belongs to the MAGUK family. Heterodimer with PALS1. Interacts with DLG5 and NF2. Interacts (via guanylate kinase-like domain) with WHRN (via third PDZ domain). Palmitoylated. As to expression, ubiquitous.

The protein localises to the cell membrane. It is found in the cell projection. Its subcellular location is the stereocilium. Functionally, essential regulator of neutrophil polarity. Regulates neutrophil polarization by regulating AKT1 phosphorylation through a mechanism that is independent of PIK3CG activity. The sequence is that of 55 kDa erythrocyte membrane protein (MPP1) from Homo sapiens (Human).